A 145-amino-acid chain; its full sequence is Holo-[acyl-carrier-protein] synthase (145 aa).

Mg(2+) is bound by residues Asp-8 and Glu-59.

Belongs to the P-Pant transferase superfamily. AcpS family. Mg(2+) serves as cofactor.

Its subcellular location is the cytoplasm. The catalysed reaction is apo-[ACP] + CoA = holo-[ACP] + adenosine 3',5'-bisphosphate + H(+). In terms of biological role, transfers the 4'-phosphopantetheine moiety from coenzyme A to a Ser of acyl-carrier-protein. The sequence is that of Holo-[acyl-carrier-protein] synthase from Granulibacter bethesdensis (strain ATCC BAA-1260 / CGDNIH1).